The following is a 308-amino-acid chain: Autophagy-related protein 3 (308 aa).

A flexible region region spans residues N83 to I159. Residues T89 to E121 form a disordered region. Basic and acidic residues predominate over residues E106 to E120. C235 functions as the Glycyl thioester intermediate in the catalytic mechanism. Positions N239–Q283 are handle region.

It belongs to the ATG3 family. In terms of assembly, monomer. Interacts with ATG8 through an intermediate thioester bond between Cys-235 and the C-terminal Gly of ATG8. Interacts with the C-terminal region of the E1-like ATG7 enzyme. Also interacts with the ATG12-ATG5 conjugate.

Its subcellular location is the cytoplasm. Its function is as follows. E2 conjugating enzyme required for the cytoplasm to vacuole transport (Cvt) and autophagy. Required for selective autophagic degradation of the nucleus (nucleophagy) as well as for mitophagy which contributes to regulate mitochondrial quantity and quality by eliminating the mitochondria to a basal level to fulfill cellular energy requirements and preventing excess ROS production. Responsible for the E2-like covalent binding of phosphatidylethanolamine to the C-terminal Gly of ATG8. The ATG12-ATG5 conjugate plays a role of an E3 and promotes the transfer of ATG8 from ATG3 to phosphatidylethanolamine (PE). This step is required for the membrane association of ATG8. The formation of the ATG8-phosphatidylethanolamine conjugate is essential for autophagy and for the cytoplasm to vacuole transport (Cvt). The ATG8-PE conjugate mediates tethering between adjacent membranes and stimulates membrane hemifusion, leading to expansion of the autophagosomal membrane during autophagy. The sequence is that of Autophagy-related protein 3 from Kluyveromyces marxianus (strain DMKU3-1042 / BCC 29191 / NBRC 104275) (Yeast).